A 448-amino-acid chain; its full sequence is Mitochondrial distribution and morphology protein 10 (448 aa).

The protein belongs to the MDM10 family. As to quaternary structure, component of the ER-mitochondria encounter structure (ERMES) or MDM complex, composed of MMM1, MDM10, MDM12 and MDM34. Associates with the mitochondrial outer membrane sorting assembly machinery SAM(core) complex.

The protein localises to the mitochondrion outer membrane. Its function is as follows. Component of the ERMES/MDM complex, which serves as a molecular tether to connect the endoplasmic reticulum and mitochondria. Components of this complex are involved in the control of mitochondrial shape and protein biogenesis and may function in phospholipid exchange. MDM10 is involved in the late assembly steps of the general translocase of the mitochondrial outer membrane (TOM complex). Functions in the TOM40-specific route of the assembly of outer membrane beta-barrel proteins, including the association of TOM40 with the receptor TOM22 and small TOM proteins. Can associate with the SAM(core) complex as well as the MDM12-MMM1 complex, both involved in late steps of the major beta-barrel assembly pathway, that is responsible for biogenesis of all outer membrane beta-barrel proteins. May act as a switch that shuttles between both complexes and channels precursor proteins into the TOM40-specific pathway. Plays a role in mitochondrial morphology and in the inheritance of mitochondria. In Podospora anserina (strain S / ATCC MYA-4624 / DSM 980 / FGSC 10383) (Pleurage anserina), this protein is Mitochondrial distribution and morphology protein 10.